Consider the following 249-residue polypeptide: Chitooligosaccharide deacetylase (249 aa).

Mg(2+) contacts are provided by His61 and His125.

It belongs to the YdjC deacetylase family. ChbG subfamily. Homodimer. Requires Mg(2+) as cofactor.

The protein resides in the cytoplasm. The catalysed reaction is N,N'-diacetylchitobiose + H2O = N-acetyl-beta-D-glucosaminyl-(1-&gt;4)-D-glucosamine + acetate. The enzyme catalyses diacetylchitobiose-6'-phosphate + H2O = N'-monoacetylchitobiose-6'-phosphate + acetate. It participates in glycan degradation; chitin degradation. Its function is as follows. Involved in the degradation of chitin. ChbG is essential for growth on the acetylated chitooligosaccharides chitobiose and chitotriose but is dispensable for growth on cellobiose and chitosan dimer, the deacetylated form of chitobiose. Deacetylation of chitobiose-6-P and chitotriose-6-P is necessary for both the activation of the chb promoter by the regulatory protein ChbR and the hydrolysis of phosphorylated beta-glucosides by the phospho-beta-glucosidase ChbF. Catalyzes the removal of only one acetyl group from chitobiose-6-P to yield monoacetylchitobiose-6-P, the inducer of ChbR and the substrate of ChbF. This is Chitooligosaccharide deacetylase from Escherichia coli O7:K1 (strain IAI39 / ExPEC).